The chain runs to 476 residues: Cysteine--tRNA ligase (476 aa).

Position 29 (cysteine 29) interacts with Zn(2+). Positions proline 31–histidine 41 match the 'HIGH' region motif. Zn(2+)-binding residues include cysteine 209, histidine 234, and glutamate 238. The 'KMSKS' region signature appears at lysine 266–serine 270. ATP is bound at residue lysine 269.

Belongs to the class-I aminoacyl-tRNA synthetase family. Zn(2+) serves as cofactor.

Its subcellular location is the cytoplasm. It carries out the reaction tRNA(Cys) + L-cysteine + ATP = L-cysteinyl-tRNA(Cys) + AMP + diphosphate. The polypeptide is Cysteine--tRNA ligase (Thermococcus onnurineus (strain NA1)).